The sequence spans 300 residues: Tyrosine recombinase XerC (300 aa).

Residues 2–88 (ENVNFTLNLF…SLRSFYKFLL (87 aa)) form the Core-binding (CB) domain. One can recognise a Tyr recombinase domain in the interval 109–294 (KIPHFLYPDE…TKDHLRYVYL (186 aa)). Catalysis depends on residues Arg-149, Lys-173, His-246, Arg-249, and His-272. Catalysis depends on Tyr-281, which acts as the O-(3'-phospho-DNA)-tyrosine intermediate.

It belongs to the 'phage' integrase family. XerC subfamily. As to quaternary structure, forms a cyclic heterotetrameric complex composed of two molecules of XerC and two molecules of XerD.

The protein resides in the cytoplasm. Its function is as follows. Site-specific tyrosine recombinase, which acts by catalyzing the cutting and rejoining of the recombining DNA molecules. The XerC-XerD complex is essential to convert dimers of the bacterial chromosome into monomers to permit their segregation at cell division. It also contributes to the segregational stability of plasmids. This Anoxybacillus flavithermus (strain DSM 21510 / WK1) protein is Tyrosine recombinase XerC.